A 754-amino-acid polypeptide reads, in one-letter code: DNA N-6-adenine-methyltransferase (754 aa).

The SAM-dependent MTase C5-type domain maps to 4-469 (LCYGSVCSGI…DRITKAVCRQ (466 aa)). Cysteine 78 is an active-site residue.

This sequence belongs to the class I-like SAM-binding methyltransferase superfamily. C5-methyltransferase family. As to quaternary structure, homodimer. Mg(2+) is required as a cofactor. The cofactor is Ca(2+).

It catalyses the reaction a 2'-deoxyadenosine in DNA + S-adenosyl-L-methionine = an N(6)-methyl-2'-deoxyadenosine in DNA + S-adenosyl-L-homocysteine + H(+). Methyltransferase that methylates adenine residues in the ssDNA and dsDNA sequence 5'-AGACC-3'. Essential for genome packaging because methylation within the pac site makes the latter cleavable. May prevent degradation of viral DNA by the host restriction-modification antiviral defense system. This chain is DNA N-6-adenine-methyltransferase (dmt), found in Enterobacteriaceae (Bacteriophage P1).